We begin with the raw amino-acid sequence, 233 residues long: Probable F-box protein At3g56670 (233 aa).

The region spanning 22-69 is the F-box domain; it reads HGGVIDIPLNTDSGVTKNTPGEIALLRFKSVSKLWSSIISSRRDFIES.

The chain is Probable F-box protein At3g56670 from Arabidopsis thaliana (Mouse-ear cress).